Consider the following 364-residue polypeptide: Geissoschizine synthase (364 aa).

C51 contacts Zn(2+). N52 is a binding site for NADP(+). Zn(2+) is bound by residues H73, E74, C104, C107, C110, C118, and C168. L194, G196, L197, S216, T217, S218, K221, R261, V280, A282, S304, T306, and R351 together coordinate NADP(+).

This sequence belongs to the zinc-containing alcohol dehydrogenase family. Class-III subfamily. As to quaternary structure, homodimer. The cofactor is Zn(2+). In terms of tissue distribution, expressed in leaf epidermis.

The catalysed reaction is (19E)-geissoschizine + NADP(+) = 4,21-dehydrogeissoschizine + NADPH. It functions in the pathway alkaloid biosynthesis. Functionally, component of the seco-iridoid and derivatives monoterpenoid indole alkaloids (MIAs, e.g. catharanthine, tabersonine, vincadifformine, vindoline, vincristine, quinine and strychnine) biosynthesis pathway. During the conversion of strictosidine aglycone to geissoschizine, catalyzes iminium reduction on 4,21-dehydrogeissoschizine to produce 19E-geissoschizine, precursor of catharanthine and tabersonine derivatives. May also trigger the production of reactive intermediate used by the HL1, HL2, HL3 and HL4 to form catharanthine, vincadifformine and tabersonine. The protein is Geissoschizine synthase of Catharanthus roseus (Madagascar periwinkle).